The following is a 509-amino-acid chain: Probable cytochrome P450 4ac1 (509 aa).

Positions 317 and 454 each coordinate heme.

It belongs to the cytochrome P450 family. Heme is required as a cofactor.

It is found in the endoplasmic reticulum membrane. Its subcellular location is the microsome membrane. Functionally, may be involved in the metabolism of insect hormones and in the breakdown of synthetic insecticides. This Drosophila melanogaster (Fruit fly) protein is Probable cytochrome P450 4ac1 (Cyp4ac1).